The primary structure comprises 416 residues: Queuine tRNA-ribosyltransferase accessory subunit 2 (416 aa).

Residues C350, C352, C355, and H381 each contribute to the Zn(2+) site.

It belongs to the queuine tRNA-ribosyltransferase family. QTRT2 subfamily. Heterodimer of a catalytic subunit qtrt1 and an accessory subunit qtrt2. It depends on Zn(2+) as a cofactor.

The protein localises to the cytoplasm. It is found in the mitochondrion outer membrane. Its function is as follows. Non-catalytic subunit of the queuine tRNA-ribosyltransferase (TGT) that catalyzes the base-exchange of a guanine (G) residue with queuine (Q) at position 34 (anticodon wobble position) in tRNAs with GU(N) anticodons (tRNA-Asp, -Asn, -His and -Tyr), resulting in the hypermodified nucleoside queuosine (7-(((4,5-cis-dihydroxy-2-cyclopenten-1-yl)amino)methyl)-7-deazaguanosine). The sequence is that of Queuine tRNA-ribosyltransferase accessory subunit 2 from Danio rerio (Zebrafish).